The chain runs to 60 residues: Insect toxin mu-NPTX-Nc1a (60 aa).

The signal sequence occupies residues 1–19 (MIYQVVLLLLVSPAPVSAA).

In terms of processing, contains 4 disulfide bonds. Expressed by the venom gland.

It localises to the secreted. Its function is as follows. Insect-specific toxin. Blocks voltage-gated potassium and sodium channels. The polypeptide is Insect toxin mu-NPTX-Nc1a (Trichonephila clavata (Joro spider)).